The sequence spans 180 residues: Chromosome-anchoring protein RacA (180 aa).

The H-T-H motif DNA-binding region spans 5–25; that stretch reads TPFIAKKLGVSPKAVVRIAQQ. Residues 67–151 are a coiled coil; that stretch reads KASSNEVEEL…LEAALTKEEP (85 aa).

It belongs to the RacA family.

Its subcellular location is the cytoplasm. Its function is as follows. Required for the formation of axial filaments and for anchoring the origin regions at the cell poles in sporulating cells, thus ensuring proper chromosome segregation in the prespore. Binds in a dispersed manner throughout the chromosome but preferentially to sites clustered in the origin portion of the chromosome, causing condensation of the chromosome and its remodeling into an elongated, anchored structure. This Bacillus cereus (strain B4264) protein is Chromosome-anchoring protein RacA.